The following is a 231-amino-acid chain: Large ribosomal subunit protein uL1 (231 aa).

It belongs to the universal ribosomal protein uL1 family. As to quaternary structure, part of the 50S ribosomal subunit.

Functionally, binds directly to 23S rRNA. The L1 stalk is quite mobile in the ribosome, and is involved in E site tRNA release. In terms of biological role, protein L1 is also a translational repressor protein, it controls the translation of the L11 operon by binding to its mRNA. This is Large ribosomal subunit protein uL1 from Neisseria gonorrhoeae (strain ATCC 700825 / FA 1090).